The sequence spans 198 residues: Probable GTP-binding protein EngB (198 aa).

The region spanning 22–195 (NRNEVAFVGR…IDKLFLEFAT (174 aa)) is the EngB-type G domain. GTP is bound by residues 30 to 37 (GRSNVGKS), 57 to 61 (GKTRL), 75 to 78 (DLPG), 142 to 145 (TKSD), and 174 to 176 (YSS). Positions 37 and 59 each coordinate Mg(2+).

This sequence belongs to the TRAFAC class TrmE-Era-EngA-EngB-Septin-like GTPase superfamily. EngB GTPase family. Mg(2+) is required as a cofactor.

Its function is as follows. Necessary for normal cell division and for the maintenance of normal septation. The polypeptide is Probable GTP-binding protein EngB (Clostridium botulinum (strain Alaska E43 / Type E3)).